The following is a 501-amino-acid chain: MNLRPEEISSIIRQQIDKYEAQVEVSDVGTVIQVGDGIARVYGLEDCMAAELLEFPGGTLGMALNLEEDNIGCVIMGPYTHIKEGDPVKRTGRIISVPVGDALIGRVVNPLGQPIDGKGPIKTEKYRPTERIAPGVITRKSVTVPLQTGLKAIDAMVPVGRGQRELIIGDRQTGKTAVAVDAIINQKGQDVICIYVAVGQKASTVAGVVQTLEAHGAMEYSIVVAANASEPAPLLYLAPYSGCAMGEEFMDNGKDVLIIYDDLSKQATAYREMSLLLRRPPGREAFPGDVFYLHSRLLERAARLAPEFGGGSITALPIIETQAGDVSAYIPTNVISITDGQIFLETDLFNSGQRPAISVGLSVSRVGGAAQIKAMKQVAGQLRLDLAQYRELAAFAQFGSDLDKATQARLNRGARTVQILKQGQYKPYPVEEQVVVIYTAVKGFLDDVELNKIGAFEDGFINFMRSNKADILKAIREQKEIKPETDAKLVAAIEEFKKTFA.

ATP is bound at residue 169-176; sequence GDRQTGKT.

This sequence belongs to the ATPase alpha/beta chains family. F-type ATPases have 2 components, CF(1) - the catalytic core - and CF(0) - the membrane proton channel. CF(1) has five subunits: alpha(3), beta(3), gamma(1), delta(1), epsilon(1). CF(0) has three main subunits: a(1), b(2) and c(9-12). The alpha and beta chains form an alternating ring which encloses part of the gamma chain. CF(1) is attached to CF(0) by a central stalk formed by the gamma and epsilon chains, while a peripheral stalk is formed by the delta and b chains.

The protein localises to the cell membrane. It catalyses the reaction ATP + H2O + 4 H(+)(in) = ADP + phosphate + 5 H(+)(out). Its function is as follows. Produces ATP from ADP in the presence of a proton gradient across the membrane. The alpha chain is a regulatory subunit. The chain is ATP synthase subunit alpha from Desulforamulus reducens (strain ATCC BAA-1160 / DSM 100696 / MI-1) (Desulfotomaculum reducens).